The sequence spans 503 residues: Transmembrane protein 184C (503 aa).

Helical transmembrane passes span Leu-17–Phe-37, Val-48–Leu-68, Ile-83–Tyr-103, Glu-115–Ile-135, Tyr-212–Tyr-232, Val-254–Ile-274, and Ala-287–Ala-307. Disordered stretches follow at residues Pro-358–Gly-391 and Ser-479–Ser-503. The segment covering Ser-373 to Ser-388 has biased composition (low complexity). A compositionally biased stretch (polar residues) spans Pro-494–Ser-503.

This sequence belongs to the TMEM184 family.

The protein resides in the membrane. Possible tumor suppressor which may play a role in cell growth. The chain is Transmembrane protein 184C (Tmem184c) from Rattus norvegicus (Rat).